We begin with the raw amino-acid sequence, 539 residues long: Cytochrome c oxidase subunit 1 homolog (539 aa).

2 consecutive transmembrane segments (helical) span residues 28-48 (LFAAHMWVLFFTLVVSTLLLL) and 75-95 (GVMATVFWGVVGFLVGVVVAL). His-117 is a heme b binding site. The next 11 helical transmembrane spans lie at 118 to 138 (TSAVIFAFGGNALIATSFYVV), 154 to 174 (FVFWGYNLFIIMAATGYLLGI), 187 to 207 (VDLWLTIVWVAYLATFLGTIL), 214 to 234 (ISVANWFYLSFIVTIAMLHIV), 265 to 285 (GHNAVGFFLTAGFLGMMYYFI), 298 to 318 (LSIIHFWALIFMYIWAGPHHL), 330 to 350 (LGMVFSIMLWMPSWGGMINGL), 368 to 388 (MMVMAVAFYGMATFEGPMMSI), 402 to 422 (IGHVHSGALGWNGMITFGAIY), 443 to 463 (HFWLATLGIVVYAAVMWVAGI), and 498 to 518 (LGGLMFLSGALIMAYNVTMTI). Cu cation-binding residues include His-266, His-316, and His-317. Heme b is bound by residues His-404 and His-406.

It belongs to the heme-copper respiratory oxidase family. The cofactor is Cu(2+). It depends on heme b as a cofactor.

It localises to the cell membrane. The enzyme catalyses 4 Fe(II)-[cytochrome c] + O2 + 8 H(+)(in) = 4 Fe(III)-[cytochrome c] + 2 H2O + 4 H(+)(out). It participates in energy metabolism; oxidative phosphorylation. Cytochrome c oxidase is the component of the respiratory chain that catalyzes the reduction of oxygen to water. Subunits 1-3 form the functional core of the enzyme complex. Co I is the catalytic subunit of the enzyme. Electrons originating in cytochrome c or a quinol are transferred to the bimetallic center formed by a high-spin heme and copper B. In Agrobacterium tumefaciens (strain T37), this protein is Cytochrome c oxidase subunit 1 homolog (fixN).